A 355-amino-acid polypeptide reads, in one-letter code: S-adenosylmethionine:tRNA ribosyltransferase-isomerase (355 aa).

The protein belongs to the QueA family. Monomer.

The protein resides in the cytoplasm. It carries out the reaction 7-aminomethyl-7-carbaguanosine(34) in tRNA + S-adenosyl-L-methionine = epoxyqueuosine(34) in tRNA + adenine + L-methionine + 2 H(+). It participates in tRNA modification; tRNA-queuosine biosynthesis. Its function is as follows. Transfers and isomerizes the ribose moiety from AdoMet to the 7-aminomethyl group of 7-deazaguanine (preQ1-tRNA) to give epoxyqueuosine (oQ-tRNA). This chain is S-adenosylmethionine:tRNA ribosyltransferase-isomerase, found in Photorhabdus laumondii subsp. laumondii (strain DSM 15139 / CIP 105565 / TT01) (Photorhabdus luminescens subsp. laumondii).